The primary structure comprises 775 residues: Polyribonucleotide nucleotidyltransferase (775 aa).

Residues 223–247 are disordered; it reads DEQVPEKPRKGRRRGRKSSPRKKTD. Basic residues predominate over residues 231–243; that stretch reads RKGRRRGRKSSPR. 2 residues coordinate Mg(2+): Asp567 and Asp573. The KH domain maps to 633–692; that stretch reads PRITTISVPVSKIGEVIGPKGKNINQITEDTGARVSIEDDGTVFISATSGGSAEAAVDRI. Residues 704–773 form the S1 motif domain; the sequence is GERFLGTVVK…NRGKISLVPV (70 aa).

This sequence belongs to the polyribonucleotide nucleotidyltransferase family. The cofactor is Mg(2+).

The protein resides in the cytoplasm. The enzyme catalyses RNA(n+1) + phosphate = RNA(n) + a ribonucleoside 5'-diphosphate. In terms of biological role, involved in mRNA degradation. Catalyzes the phosphorolysis of single-stranded polyribonucleotides processively in the 3'- to 5'-direction. The chain is Polyribonucleotide nucleotidyltransferase from Corynebacterium kroppenstedtii (strain DSM 44385 / JCM 11950 / CIP 105744 / CCUG 35717).